The chain runs to 89 residues: Small ribosomal subunit protein uS15 (89 aa).

It belongs to the universal ribosomal protein uS15 family. In terms of assembly, part of the 30S ribosomal subunit. Forms a bridge to the 50S subunit in the 70S ribosome, contacting the 23S rRNA.

Its function is as follows. One of the primary rRNA binding proteins, it binds directly to 16S rRNA where it helps nucleate assembly of the platform of the 30S subunit by binding and bridging several RNA helices of the 16S rRNA. Functionally, forms an intersubunit bridge (bridge B4) with the 23S rRNA of the 50S subunit in the ribosome. The chain is Small ribosomal subunit protein uS15 from Prochlorococcus marinus subsp. pastoris (strain CCMP1986 / NIES-2087 / MED4).